We begin with the raw amino-acid sequence, 717 residues long: Protein Teyrha-meyrha (717 aa).

Residues Phe-140 to His-152 are compositionally biased toward polar residues. Disordered stretches follow at residues Phe-140–Ala-214, His-229–Val-270, Lys-440–Lys-498, Ser-511–Pro-539, Asp-563–Ala-594, and Gln-624–Ala-717. Residues Ala-195–Ala-214 are compositionally biased toward low complexity. The segment covering Pro-235–His-263 has biased composition (basic residues). A compositionally biased stretch (basic and acidic residues) spans Pro-442–Glu-451. Acidic residues predominate over residues Glu-452–Pro-466. Over residues Glu-471 to Thr-482 the composition is skewed to polar residues. Basic and acidic residues predominate over residues Lys-513–Val-522. Composition is skewed to low complexity over residues Ser-523 to Ser-533 and Asn-570 to Asn-580. Residues Gln-630–Asn-640 show a composition bias toward polar residues. Residues Asn-667–Asn-686 show a composition bias toward low complexity. Positions Pro-687–Ser-704 are enriched in polar residues.

As to expression, in embryos, expressed specifically in M12 (at protein level).

It localises to the nucleus. Its function is as follows. Required for the correct synaptic targeting of motoneurons RP5 and V to muscle 12 (M12). May be involved in the negative regulation of Tl in M12. Involved in the correct patterning of veins in the proximal (costal) region of the wing blade. The polypeptide is Protein Teyrha-meyrha (Drosophila melanogaster (Fruit fly)).